The primary structure comprises 105 residues: UPF0235 protein RPR_04990 (105 aa).

This sequence belongs to the UPF0235 family.

This is UPF0235 protein RPR_04990 from Rickettsia peacockii (strain Rustic).